The chain runs to 369 residues: Iron-sulfur cluster carrier protein (369 aa).

115-122 (GKGGVGKS) provides a ligand contact to ATP.

Belongs to the Mrp/NBP35 ATP-binding proteins family. In terms of assembly, homodimer. Holo-ApbC forms a mixture of homodimers and homotetramers.

Its function is as follows. Binds and transfers iron-sulfur (Fe-S) clusters to target apoproteins. Can hydrolyze ATP. Both activities are required for function in vivo, but the ability to hydrolyze ATP is not necessary for Fe-S cluster transfer. The protein is Iron-sulfur cluster carrier protein of Salmonella typhimurium (strain LT2 / SGSC1412 / ATCC 700720).